The following is a 198-amino-acid chain: ATP-dependent Clp protease proteolytic subunit (198 aa).

Catalysis depends on S98, which acts as the Nucleophile. H123 is an active-site residue.

Belongs to the peptidase S14 family. Fourteen ClpP subunits assemble into 2 heptameric rings which stack back to back to give a disk-like structure with a central cavity, resembling the structure of eukaryotic proteasomes.

It localises to the cytoplasm. It catalyses the reaction Hydrolysis of proteins to small peptides in the presence of ATP and magnesium. alpha-casein is the usual test substrate. In the absence of ATP, only oligopeptides shorter than five residues are hydrolyzed (such as succinyl-Leu-Tyr-|-NHMec, and Leu-Tyr-Leu-|-Tyr-Trp, in which cleavage of the -Tyr-|-Leu- and -Tyr-|-Trp bonds also occurs).. In terms of biological role, cleaves peptides in various proteins in a process that requires ATP hydrolysis. Has a chymotrypsin-like activity. Plays a major role in the degradation of misfolded proteins. The chain is ATP-dependent Clp protease proteolytic subunit from Ehrlichia ruminantium (strain Welgevonden).